The following is a 356-amino-acid chain: N-acyl-phosphatidylethanolamine-hydrolyzing phospholipase D 1 (356 aa).

Residues His-144 and His-146 each coordinate Zn(2+). Tyr-147 contacts an N-acyl-1,2-diacyl-sn-glycero-3-phosphoethanolamine. Zn(2+) is bound by residues Asp-148, His-149, His-217, and Asp-248. Residue His-286 coordinates an N-acyl-1,2-diacyl-sn-glycero-3-phosphoethanolamine. Residue His-308 coordinates Zn(2+).

Belongs to the NAPE-PLD family. Zn(2+) is required as a cofactor. Expressed in interneurons that are in close proximity to the primary sensory neurons. Predominantly expressed in the pharynx but can also be found in cell bodies of the dorsal and ventral nerve cords.

The catalysed reaction is an N-acyl-1,2-diacyl-sn-glycero-3-phosphoethanolamine + H2O = an N-acylethanolamine + a 1,2-diacyl-sn-glycero-3-phosphate + H(+). It carries out the reaction 1,2-dihexadecanoyl-sn-glycero-3-phospho-(N-hexadecanoyl)-ethanolamine + H2O = 1,2-dihexadecanoyl-sn-glycero-3-phosphate + N-hexadecanoylethanolamine + H(+). The enzyme catalyses N-(5Z,8Z,11Z,14Z-eicosatetraenoyl)-1,2-di-(9Z-octadecenoyl)-sn-glycero-3-phosphoethanolamine + H2O = N-(5Z,8Z,11Z,14Z-eicosatetraenoyl)-ethanolamine + 1,2-di-(9Z-octadecenoyl)-sn-glycero-3-phosphate + H(+). Its function is as follows. D-type phospholipase that hydrolyzes N-acyl-phosphatidylethanolamines (NAPEs) to produce bioactive N-acylethanolamines/fatty acid ethanolamides (NAEs/FAEs) and phosphatidic acid. NAEs are bioactive lipids that are involved in diverse physiological processes such as growth and lifespan. In Caenorhabditis elegans, this protein is N-acyl-phosphatidylethanolamine-hydrolyzing phospholipase D 1.